We begin with the raw amino-acid sequence, 360 residues long: Protein phosphatase 1L (360 aa).

Over Met1 to Thr25 the chain is Extracellular. A helical membrane pass occupies residues Leu26–Thr42. Residues Asp43–Gln360 lie on the Cytoplasmic side of the membrane. The PPM-type phosphatase domain occupies Asn92–Phe351. 4 residues coordinate Mn(2+): Asp128, Gly129, Asp302, and Asp342.

This sequence belongs to the PP2C family. Interacts with MAP3K7/TAK1 and MAP3K5. It depends on Mg(2+) as a cofactor. Requires Mn(2+) as cofactor.

Its subcellular location is the membrane. It catalyses the reaction O-phospho-L-seryl-[protein] + H2O = L-seryl-[protein] + phosphate. The catalysed reaction is O-phospho-L-threonyl-[protein] + H2O = L-threonyl-[protein] + phosphate. Acts as a suppressor of the SAPK signaling pathways by associating with and dephosphorylating MAP3K7/TAK1 and MAP3K5, and by attenuating the association between MAP3K7/TAK1 and MAP2K4 or MAP2K6. The chain is Protein phosphatase 1L (PPM1L) from Bos taurus (Bovine).